Consider the following 451-residue polypeptide: Acetylornithine aminotransferase, mitochondrial (451 aa).

Lysine 302 bears the N6-(pyridoxal phosphate)lysine mark.

This sequence belongs to the class-III pyridoxal-phosphate-dependent aminotransferase family. Pyridoxal 5'-phosphate is required as a cofactor. As to expression, found at highest levels in nodules, confined to the infected cells.

The protein localises to the mitochondrion. It catalyses the reaction N(2)-acetyl-L-ornithine + 2-oxoglutarate = N-acetyl-L-glutamate 5-semialdehyde + L-glutamate. Its pathway is amino-acid biosynthesis; L-arginine biosynthesis; N(2)-acetyl-L-ornithine from L-glutamate: step 4/4. Functionally, involved in the biosynthesis of citrulline. This chain is Acetylornithine aminotransferase, mitochondrial (AG118), found in Alnus glutinosa (European alder).